Consider the following 883-residue polypeptide: Alanine--tRNA ligase (883 aa).

Zn(2+) contacts are provided by His563, His567, Cys677, and His681.

Belongs to the class-II aminoacyl-tRNA synthetase family. Zn(2+) is required as a cofactor.

It localises to the cytoplasm. It carries out the reaction tRNA(Ala) + L-alanine + ATP = L-alanyl-tRNA(Ala) + AMP + diphosphate. In terms of biological role, catalyzes the attachment of alanine to tRNA(Ala) in a two-step reaction: alanine is first activated by ATP to form Ala-AMP and then transferred to the acceptor end of tRNA(Ala). Also edits incorrectly charged Ser-tRNA(Ala) and Gly-tRNA(Ala) via its editing domain. The protein is Alanine--tRNA ligase of Cereibacter sphaeroides (strain ATCC 17023 / DSM 158 / JCM 6121 / CCUG 31486 / LMG 2827 / NBRC 12203 / NCIMB 8253 / ATH 2.4.1.) (Rhodobacter sphaeroides).